The following is a 163-amino-acid chain: Peptidyl-prolyl cis-trans isomerase (163 aa).

A PPIase cyclophilin-type domain is found at 5 to 162 (YFDVSSNGKP…SVLKIEDCGT (158 aa)).

The protein belongs to the cyclophilin-type PPIase family. PPIase A subfamily.

It localises to the cytoplasm. The catalysed reaction is [protein]-peptidylproline (omega=180) = [protein]-peptidylproline (omega=0). Binds cyclosporin A (CsA). CsA mediates some of its effects via an inhibitory action on PPIase. In terms of biological role, PPIases accelerate the folding of proteins. It catalyzes the cis-trans isomerization of proline imidic peptide bonds in oligopeptides. This chain is Peptidyl-prolyl cis-trans isomerase (PIG28), found in Uromyces fabae (Rust fungus).